A 187-amino-acid polypeptide reads, in one-letter code: MNETQIQRETRQVVEDVLEKTNLKQGALFVLGLSSSEVLGGQIGKESSQEIGELIVETILGILGSRGIHLAVQGCEHVNRALVVERQVAEQFDLEIVSVHPTLHAGGSGQLAAFKFMQDPVEVEFIKAHAGLDIGDTAIGMHVKHVQVPIRPILREIGHAHVTALASRPKLIGGARAHYPQDAIRKS.

Belongs to the UPF0340 family.

In Streptococcus pneumoniae serotype 19F (strain G54), this protein is UPF0340 protein SPG_0604.